We begin with the raw amino-acid sequence, 306 residues long: Methionyl-tRNA formyltransferase (306 aa).

110–113 (SLLP) contributes to the (6S)-5,6,7,8-tetrahydrofolate binding site.

Belongs to the Fmt family.

It catalyses the reaction L-methionyl-tRNA(fMet) + (6R)-10-formyltetrahydrofolate = N-formyl-L-methionyl-tRNA(fMet) + (6S)-5,6,7,8-tetrahydrofolate + H(+). Attaches a formyl group to the free amino group of methionyl-tRNA(fMet). The formyl group appears to play a dual role in the initiator identity of N-formylmethionyl-tRNA by promoting its recognition by IF2 and preventing the misappropriation of this tRNA by the elongation apparatus. The protein is Methionyl-tRNA formyltransferase of Brucella suis (strain ATCC 23445 / NCTC 10510).